Consider the following 1279-residue polypeptide: ATP-dependent helicase/nuclease subunit A (1279 aa).

Positions 4–499 (TKWTDEQRQA…VKLFKNFRSR (496 aa)) constitute a UvrD-like helicase ATP-binding domain. 25–32 (AGAGAGKT) contacts ATP. The region spanning 526–853 (EEALKVGASY…RIMSIHKSKG (328 aa)) is the UvrD-like helicase C-terminal domain.

This sequence belongs to the helicase family. AddA subfamily. As to quaternary structure, heterodimer of AddA and AddB/RexB. Mg(2+) serves as cofactor.

The catalysed reaction is Couples ATP hydrolysis with the unwinding of duplex DNA by translocating in the 3'-5' direction.. It carries out the reaction ATP + H2O = ADP + phosphate + H(+). In terms of biological role, the heterodimer acts as both an ATP-dependent DNA helicase and an ATP-dependent, dual-direction single-stranded exonuclease. Recognizes the chi site generating a DNA molecule suitable for the initiation of homologous recombination. The AddA nuclease domain is required for chi fragment generation; this subunit has the helicase and 3' -&gt; 5' nuclease activities. This chain is ATP-dependent helicase/nuclease subunit A, found in Clostridium botulinum (strain Kyoto / Type A2).